The following is a 154-amino-acid chain: uncharacterized protein (154 aa).

A divalent metal cation-binding residues include His47, His127, and His131. Position 150 is a phosphotyrosine (Tyr150).

This sequence belongs to the DinB family. Homodimer.

This is an uncharacterized protein from Bacillus subtilis (strain 168).